Here is a 303-residue protein sequence, read N- to C-terminus: UPF0282 protein MM_2966 (303 aa).

It belongs to the UPF0282 family.

This is UPF0282 protein MM_2966 from Methanosarcina mazei (strain ATCC BAA-159 / DSM 3647 / Goe1 / Go1 / JCM 11833 / OCM 88) (Methanosarcina frisia).